A 133-amino-acid chain; its full sequence is ATP synthase epsilon chain (133 aa).

Residues 103–133 (VSQMEGQEPSTEKIKAQQNFNRARARVQATK) are disordered.

Belongs to the ATPase epsilon chain family. As to quaternary structure, F-type ATPases have 2 components, CF(1) - the catalytic core - and CF(0) - the membrane proton channel. CF(1) has five subunits: alpha(3), beta(3), gamma(1), delta(1), epsilon(1). CF(0) has three main subunits: a, b and c.

Its subcellular location is the cellular thylakoid membrane. In terms of biological role, produces ATP from ADP in the presence of a proton gradient across the membrane. This Prochlorococcus marinus (strain MIT 9313) protein is ATP synthase epsilon chain.